The chain runs to 226 residues: Orotidine 5'-phosphate decarboxylase (226 aa).

Substrate-binding positions include Asp-8, Lys-30, 58–67, Thr-117, Arg-177, Gln-186, Gly-206, and Arg-207; that span reads DLKIHDIPNT. The active-site Proton donor is the Lys-60.

It belongs to the OMP decarboxylase family. Type 1 subfamily. In terms of assembly, homodimer.

The catalysed reaction is orotidine 5'-phosphate + H(+) = UMP + CO2. Its pathway is pyrimidine metabolism; UMP biosynthesis via de novo pathway; UMP from orotate: step 2/2. Functionally, catalyzes the decarboxylation of orotidine 5'-monophosphate (OMP) to uridine 5'-monophosphate (UMP). This chain is Orotidine 5'-phosphate decarboxylase, found in Campylobacter jejuni subsp. jejuni serotype O:6 (strain 81116 / NCTC 11828).